A 175-amino-acid chain; its full sequence is NADH dehydrogenase [ubiquinone] iron-sulfur protein 4, mitochondrial (175 aa).

A mitochondrion-targeting transit peptide spans 1-42 (MAAVSMSVVLRQTLWRRRAVAVAALSVSRVPTRSLRTSTWRL). A disordered region spans residues 149–175 (ERKVPKPKSKSYGANFSWNKRTRVSTK).

It belongs to the complex I NDUFS4 subunit family. In terms of assembly, mammalian complex I is composed of 45 different subunits. This is a component of the iron-sulfur (IP) fragment of the enzyme. Interacts with BCAP31 and TOMM40; the interaction mediates its translocation to the mitochondria; the interaction with BCAP31 is direct.

The protein localises to the mitochondrion inner membrane. In terms of biological role, accessory subunit of the mitochondrial membrane respiratory chain NADH dehydrogenase (Complex I), that is believed not to be involved in catalysis. Complex I functions in the transfer of electrons from NADH to the respiratory chain. The immediate electron acceptor for the enzyme is believed to be ubiquinone. This Pan troglodytes (Chimpanzee) protein is NADH dehydrogenase [ubiquinone] iron-sulfur protein 4, mitochondrial (NDUFS4).